A 143-amino-acid chain; its full sequence is Large ribosomal subunit protein uL11 (143 aa).

This sequence belongs to the universal ribosomal protein uL11 family. In terms of assembly, part of the ribosomal stalk of the 50S ribosomal subunit. Interacts with L10 and the large rRNA to form the base of the stalk. L10 forms an elongated spine to which L12 dimers bind in a sequential fashion forming a multimeric L10(L12)X complex. Post-translationally, one or more lysine residues are methylated.

Functionally, forms part of the ribosomal stalk which helps the ribosome interact with GTP-bound translation factors. In Paraburkholderia xenovorans (strain LB400), this protein is Large ribosomal subunit protein uL11.